The following is a 75-amino-acid chain: METRFPQQSQQTPASTNRRRPFKHEDYPCRRQQRSSTLYVLIFLAIFLSKFTNQLLLSLLEAVIRTVTTLQQLLT.

Polar residues predominate over residues 1-16 (METRFPQQSQQTPAST). Residues 1-29 (METRFPQQSQQTPASTNRRRPFKHEDYPC) are disordered. A helical transmembrane segment spans residues 38–60 (LYVLIFLAIFLSKFTNQLLLSLL).

It belongs to the Leviviricetes lysis protein family.

The protein resides in the host cell inner membrane. Its subcellular location is the host cell outer membrane. Its function is as follows. Induces the formation of specific membrane adhesion sites between the inner and outer membranes, apparently leading to host cell lysis. Lysis may be performed via activation of host murein hydrolases. The protein is Lysis protein of Escherichia phage MS2 (Bacteriophage MS2).